A 344-amino-acid polypeptide reads, in one-letter code: MTDAGRQGRVEALSISVTAPYCRFEKTGSPDLEGDETVLGLIEHGTGHTDVSLVDGAPRTAVHTTTRDDEAFTEVWHAQRPVESGMDNGIAWARTDAYLFGVVRTGESGRYADATAALYTNVFQLTRSLGYPLLARTWNYVSGINTTNADGLEVYRDFCVGRAQALDEGGIDPATMPAATGIGAHGGGITCVFLAARGGVRINIENPAVLTAHHYPTTYGPRPPVFARATWLGPPEGGRLFISATAGILGHRTVHHGDVTGQCEVALDNMARVIGAENLRRHGVQRGHVLADVDHLKVYVRRREDLDTVRRVCAARLSSTAAVALLHTDIAREDLLVEIEGMVA.

The substrate site is built by tyrosine 155, arginine 162, tyrosine 215, and arginine 228. The active-site Proton acceptor is the glutamate 338.

It belongs to the FkbO/Hyg5 family. Monomer.

It carries out the reaction chorismate + H2O = (3R,4R)-3,4-dihydroxy-3,4-dihydrobenzoate + pyruvate. Competitively inhibited by 3-(2-carboxyethyl)benzoate. Functionally, involved in the biosynthesis of the macrocyclic amino acid-linked polyketides FK506 and FK520 which are potent immunosuppressants that prevent T-cell proliferation through initial binding to the immunophilin FKBP12. Catalyzes the hydrolysis of chorismate via a 1,4-conjugate elimination of water to yield (4R,5R)-4,5-dihydroxycyclohexa-1,5-dienecarboxylic acid (DCDC). This Streptomyces hygroscopicus protein is Chorismatase (fkbO).